Reading from the N-terminus, the 119-residue chain is Large ribosomal subunit protein uL18 (119 aa).

Residues 1–23 (MSQVDKAARRQKIKDRSRVSVQG) are disordered.

It belongs to the universal ribosomal protein uL18 family. As to quaternary structure, part of the 50S ribosomal subunit; part of the 5S rRNA/L5/L18/L25 subcomplex. Contacts the 5S and 23S rRNAs.

Its function is as follows. This is one of the proteins that bind and probably mediate the attachment of the 5S RNA into the large ribosomal subunit, where it forms part of the central protuberance. The polypeptide is Large ribosomal subunit protein uL18 (Chlorobium chlorochromatii (strain CaD3)).